We begin with the raw amino-acid sequence, 280 residues long: Probable 2-(5''-triphosphoribosyl)-3'-dephosphocoenzyme-A synthase (280 aa).

It belongs to the CitG/MdcB family.

It carries out the reaction 3'-dephospho-CoA + ATP = 2'-(5''-triphospho-alpha-D-ribosyl)-3'-dephospho-CoA + adenine. This is Probable 2-(5''-triphosphoribosyl)-3'-dephosphocoenzyme-A synthase from Lactiplantibacillus plantarum (strain ATCC BAA-793 / NCIMB 8826 / WCFS1) (Lactobacillus plantarum).